A 36-amino-acid chain; its full sequence is uncharacterized protein (36 aa).

This is an uncharacterized protein from Saccharomyces cerevisiae (strain ATCC 204508 / S288c) (Baker's yeast).